Consider the following 274-residue polypeptide: Rhamnulose-1-phosphate aldolase (274 aa).

The active site involves Glu-117. Zn(2+)-binding residues include His-141, His-143, and His-212.

This sequence belongs to the aldolase class II family. RhaD subfamily. In terms of assembly, homotetramer. Requires Zn(2+) as cofactor.

The protein localises to the cytoplasm. It carries out the reaction L-rhamnulose 1-phosphate = (S)-lactaldehyde + dihydroxyacetone phosphate. The protein operates within carbohydrate degradation; L-rhamnose degradation; glycerone phosphate from L-rhamnose: step 3/3. Its function is as follows. Catalyzes the reversible cleavage of L-rhamnulose-1-phosphate to dihydroxyacetone phosphate (DHAP) and L-lactaldehyde. The chain is Rhamnulose-1-phosphate aldolase from Escherichia coli (strain SE11).